The primary structure comprises 245 residues: MTNPKKIEMVNDFQQQFAKKMNELGFTYSNIDLYQQAFSHSSFINDFNMDRLAHNERLEFLGDAVLELTVSRYLFDKHPDLPEGNLTKMRATIVCEPSLVIFANKIELNQLILLGKGEEKTGGRTRPSLVSDAFEAFVGALYLDQGLDVVWQFAEKVIFPYVEDDELVGVVDFKTQFQEYVHSQNRGDVTYRLIKEEGPAHHRLFTSEVILENEAVATGQGKTKKESEQKAAESAYSKLKSNNNL.

The RNase III domain maps to 17 to 146 (FAKKMNELGF…FVGALYLDQG (130 aa)). Glu-59 is a binding site for Mg(2+). Residue Asp-63 is part of the active site. The Mg(2+) site is built by Asp-132 and Glu-135. Glu-135 is an active-site residue. The DRBM domain occupies 172 to 241 (DFKTQFQEYV…AESAYSKLKS (70 aa)). The interval 217-245 (ATGQGKTKKESEQKAAESAYSKLKSNNNL) is disordered.

The protein belongs to the ribonuclease III family. As to quaternary structure, homodimer. It depends on Mg(2+) as a cofactor.

It localises to the cytoplasm. It carries out the reaction Endonucleolytic cleavage to 5'-phosphomonoester.. Its function is as follows. Digests double-stranded RNA. Involved in the processing of primary rRNA transcript to yield the immediate precursors to the large and small rRNAs (23S and 16S). Processes some mRNAs, and tRNAs when they are encoded in the rRNA operon. Processes pre-crRNA and tracrRNA of type II CRISPR loci if present in the organism. The protein is Ribonuclease 3 of Staphylococcus haemolyticus (strain JCSC1435).